The primary structure comprises 445 residues: Chromosomal replication initiator protein DnaA (445 aa).

Residues Met-1–Lys-73 are domain I, interacts with DnaA modulators. The domain II stretch occupies residues Lys-73–Thr-106. Positions Met-107–Ser-323 are domain III, AAA+ region. Gly-151, Gly-153, Lys-154, and Thr-155 together coordinate ATP. Residues Ser-324 to Lys-445 are domain IV, binds dsDNA.

The protein belongs to the DnaA family. Oligomerizes as a right-handed, spiral filament on DNA at oriC.

The protein localises to the cytoplasm. In terms of biological role, plays an essential role in the initiation and regulation of chromosomal replication. ATP-DnaA binds to the origin of replication (oriC) to initiate formation of the DNA replication initiation complex once per cell cycle. Binds the DnaA box (a 9 base pair repeat at the origin) and separates the double-stranded (ds)DNA. Forms a right-handed helical filament on oriC DNA; dsDNA binds to the exterior of the filament while single-stranded (ss)DNA is stabiized in the filament's interior. The ATP-DnaA-oriC complex binds and stabilizes one strand of the AT-rich DNA unwinding element (DUE), permitting loading of DNA polymerase. After initiation quickly degrades to an ADP-DnaA complex that is not apt for DNA replication. Binds acidic phospholipids. The sequence is that of Chromosomal replication initiator protein DnaA from Clostridium botulinum (strain Loch Maree / Type A3).